Reading from the N-terminus, the 351-residue chain is Dihydroorotate dehydrogenase (quinone) (351 aa).

FMN contacts are provided by residues 67–71 (AGFDK) and threonine 91. Residue lysine 71 coordinates substrate. Residue 116–120 (NAMGF) coordinates substrate. FMN-binding residues include asparagine 145 and asparagine 178. A substrate-binding site is contributed by asparagine 178. Serine 181 functions as the Nucleophile in the catalytic mechanism. Asparagine 183 contacts substrate. FMN-binding residues include lysine 214 and threonine 242. Residue 243-244 (NT) participates in substrate binding. FMN is bound by residues glycine 262, glycine 291, and 312–313 (YS).

Belongs to the dihydroorotate dehydrogenase family. Type 2 subfamily. In terms of assembly, monomer. It depends on FMN as a cofactor.

Its subcellular location is the cell membrane. The catalysed reaction is (S)-dihydroorotate + a quinone = orotate + a quinol. Its pathway is pyrimidine metabolism; UMP biosynthesis via de novo pathway; orotate from (S)-dihydroorotate (quinone route): step 1/1. In terms of biological role, catalyzes the conversion of dihydroorotate to orotate with quinone as electron acceptor. The polypeptide is Dihydroorotate dehydrogenase (quinone) (Helicobacter acinonychis (strain Sheeba)).